Consider the following 373-residue polypeptide: WAT1-related protein At4g08300 (373 aa).

Transmembrane regions (helical) follow at residues 11–31, 41–61, 67–87, 102–122, 139–159, 185–205, 219–239, 255–275, 281–301, and 306–326; these read PIIA…ITMV, ILAT…ALIL, PKMT…EPLL, TYSS…AVIF, IGTA…GPAI, WVTG…FFIL, LVMW…LIMV, AAVY…SIVI, VFTT…GVLV, and IHLG…SVVW. EamA domains follow at residues 23–151 and 198–325; these read AGMY…AMVM and TWAG…YSVV.

Belongs to the drug/metabolite transporter (DMT) superfamily. Plant drug/metabolite exporter (P-DME) (TC 2.A.7.4) family.

Its subcellular location is the membrane. The sequence is that of WAT1-related protein At4g08300 from Arabidopsis thaliana (Mouse-ear cress).